A 442-amino-acid polypeptide reads, in one-letter code: tRNA modification GTPase MnmE (442 aa).

Positions 27, 84, and 124 each coordinate (6S)-5-formyl-5,6,7,8-tetrahydrofolate. Residues 221–366 enclose the TrmE-type G domain; sequence GLHVVIVGAP…LLDALQAFAE (146 aa). Residues 231 to 236, 250 to 256, and 275 to 278 each bind GTP; these read NAGKSS, SEEAGTT, and DTAG. Mg(2+) is bound by residues Ser-235 and Thr-256. Position 442 (Lys-442) interacts with (6S)-5-formyl-5,6,7,8-tetrahydrofolate.

This sequence belongs to the TRAFAC class TrmE-Era-EngA-EngB-Septin-like GTPase superfamily. TrmE GTPase family. In terms of assembly, homodimer. Heterotetramer of two MnmE and two MnmG subunits. K(+) is required as a cofactor.

It localises to the cytoplasm. Exhibits a very high intrinsic GTPase hydrolysis rate. Involved in the addition of a carboxymethylaminomethyl (cmnm) group at the wobble position (U34) of certain tRNAs, forming tRNA-cmnm(5)s(2)U34. The protein is tRNA modification GTPase MnmE of Brucella suis (strain ATCC 23445 / NCTC 10510).